A 284-amino-acid chain; its full sequence is Pantothenate synthetase (284 aa).

30–37 (MGNLHDGH) provides a ligand contact to ATP. His-37 functions as the Proton donor in the catalytic mechanism. Residue Gln-61 participates in (R)-pantoate binding. Gln-61 contributes to the beta-alanine binding site. An ATP-binding site is contributed by 149–152 (GEKD). Gln-155 serves as a coordination point for (R)-pantoate. Residues Ile-178 and 186 to 189 (LSSR) each bind ATP.

Belongs to the pantothenate synthetase family. As to quaternary structure, homodimer.

Its subcellular location is the cytoplasm. It carries out the reaction (R)-pantoate + beta-alanine + ATP = (R)-pantothenate + AMP + diphosphate + H(+). It participates in cofactor biosynthesis; (R)-pantothenate biosynthesis; (R)-pantothenate from (R)-pantoate and beta-alanine: step 1/1. Its function is as follows. Catalyzes the condensation of pantoate with beta-alanine in an ATP-dependent reaction via a pantoyl-adenylate intermediate. The polypeptide is Pantothenate synthetase (Salmonella newport (strain SL254)).